The following is a 162-amino-acid chain: Cyclic pyranopterin monophosphate synthase (162 aa).

Residues 75-77 (MCH) and 115-116 (ME) each bind substrate. Residue Asp-130 is part of the active site.

The protein belongs to the MoaC family. As to quaternary structure, homohexamer; trimer of dimers.

It catalyses the reaction (8S)-3',8-cyclo-7,8-dihydroguanosine 5'-triphosphate = cyclic pyranopterin phosphate + diphosphate. It functions in the pathway cofactor biosynthesis; molybdopterin biosynthesis. Its function is as follows. Catalyzes the conversion of (8S)-3',8-cyclo-7,8-dihydroguanosine 5'-triphosphate to cyclic pyranopterin monophosphate (cPMP). The protein is Cyclic pyranopterin monophosphate synthase of Geobacillus kaustophilus (strain HTA426).